Reading from the N-terminus, the 268-residue chain is Imidazole glycerol phosphate synthase subunit HisF (268 aa).

Residues Asp12 and Asp131 contribute to the active site.

The protein belongs to the HisA/HisF family. As to quaternary structure, heterodimer of HisH and HisF.

The protein localises to the cytoplasm. It carries out the reaction 5-[(5-phospho-1-deoxy-D-ribulos-1-ylimino)methylamino]-1-(5-phospho-beta-D-ribosyl)imidazole-4-carboxamide + L-glutamine = D-erythro-1-(imidazol-4-yl)glycerol 3-phosphate + 5-amino-1-(5-phospho-beta-D-ribosyl)imidazole-4-carboxamide + L-glutamate + H(+). The protein operates within amino-acid biosynthesis; L-histidine biosynthesis; L-histidine from 5-phospho-alpha-D-ribose 1-diphosphate: step 5/9. Its function is as follows. IGPS catalyzes the conversion of PRFAR and glutamine to IGP, AICAR and glutamate. The HisF subunit catalyzes the cyclization activity that produces IGP and AICAR from PRFAR using the ammonia provided by the HisH subunit. This is Imidazole glycerol phosphate synthase subunit HisF from Methanoculleus marisnigri (strain ATCC 35101 / DSM 1498 / JR1).